The following is a 210-amino-acid chain: MTLAKDIASHLLKIQAVYLKPEEPFTWASGIKSPIYTDNRVTLAYPETRTLIENGFVEAIKEAFPEVEVIAGTATAGIPHGAIIADKMDLPFAYIRSKPKDHGAGNQIEGRVAQGQKMVVVEDLISTGGSVLEAVAAAKREGADVLGVVAIFSYQLPKADKNFADAGVKLVTLSNYSDLIHLAQEEGYITPEGLYLLKRFKEDQENWQEG.

5-phospho-alpha-D-ribose 1-diphosphate-binding positions include R96, K100, H102, and 122–130 (EDLISTGGS). An orotate-binding site is contributed by S126.

This sequence belongs to the purine/pyrimidine phosphoribosyltransferase family. PyrE subfamily. As to quaternary structure, homodimer. Mg(2+) is required as a cofactor.

The catalysed reaction is orotidine 5'-phosphate + diphosphate = orotate + 5-phospho-alpha-D-ribose 1-diphosphate. Its pathway is pyrimidine metabolism; UMP biosynthesis via de novo pathway; UMP from orotate: step 1/2. Functionally, catalyzes the transfer of a ribosyl phosphate group from 5-phosphoribose 1-diphosphate to orotate, leading to the formation of orotidine monophosphate (OMP). The chain is Orotate phosphoribosyltransferase from Streptococcus pneumoniae (strain ATCC BAA-255 / R6).